The primary structure comprises 125 residues: Small ribosomal subunit protein uS12 (125 aa).

Residue Asp89 is modified to 3-methylthioaspartic acid.

Belongs to the universal ribosomal protein uS12 family. In terms of assembly, part of the 30S ribosomal subunit. Contacts proteins S8 and S17. May interact with IF1 in the 30S initiation complex.

In terms of biological role, with S4 and S5 plays an important role in translational accuracy. Functionally, interacts with and stabilizes bases of the 16S rRNA that are involved in tRNA selection in the A site and with the mRNA backbone. Located at the interface of the 30S and 50S subunits, it traverses the body of the 30S subunit contacting proteins on the other side and probably holding the rRNA structure together. The combined cluster of proteins S8, S12 and S17 appears to hold together the shoulder and platform of the 30S subunit. The protein is Small ribosomal subunit protein uS12 of Clostridium kluyveri (strain ATCC 8527 / DSM 555 / NBRC 12016 / NCIMB 10680 / K1).